The sequence spans 138 residues: Superoxide dismutase [Mn] (138 aa).

Positions 2, 49, 133, and 137 each coordinate Mn(2+).

The protein belongs to the iron/manganese superoxide dismutase family. Mn(2+) is required as a cofactor.

It catalyses the reaction 2 superoxide + 2 H(+) = H2O2 + O2. Functionally, destroys superoxide anion radicals which are normally produced within the cells and which are toxic to biological systems. The chain is Superoxide dismutase [Mn] (sodA) from Mycobacterium szulgai.